Reading from the N-terminus, the 457-residue chain is Phosphoglucosamine mutase (457 aa).

Catalysis depends on S103, which acts as the Phosphoserine intermediate. Mg(2+)-binding residues include S103, D245, D247, and D249. Residue S103 is modified to Phosphoserine.

This sequence belongs to the phosphohexose mutase family. It depends on Mg(2+) as a cofactor. Activated by phosphorylation.

The catalysed reaction is alpha-D-glucosamine 1-phosphate = D-glucosamine 6-phosphate. Functionally, catalyzes the conversion of glucosamine-6-phosphate to glucosamine-1-phosphate. This is Phosphoglucosamine mutase from Syntrophotalea carbinolica (strain DSM 2380 / NBRC 103641 / GraBd1) (Pelobacter carbinolicus).